The sequence spans 372 residues: Chaperone protein DnaJ (372 aa).

A J domain is found at 5-70 (DYYDVLGVER…QKRANYDQYG (66 aa)). A CR-type zinc finger spans residues 130 to 208 (GTTKDIQINT…CHGDGRVHKK (79 aa)). Zn(2+) is bound by residues cysteine 143, cysteine 146, cysteine 160, cysteine 163, cysteine 182, cysteine 185, cysteine 196, and cysteine 199. 4 CXXCXGXG motif repeats span residues 143 to 150 (CDSCDGSG), 160 to 167 (CSTCHGAG), 182 to 189 (CPSCHGSG), and 196 to 203 (CKSCHGDG).

Belongs to the DnaJ family. In terms of assembly, homodimer. Zn(2+) serves as cofactor.

Its subcellular location is the cytoplasm. In terms of biological role, participates actively in the response to hyperosmotic and heat shock by preventing the aggregation of stress-denatured proteins and by disaggregating proteins, also in an autonomous, DnaK-independent fashion. Unfolded proteins bind initially to DnaJ; upon interaction with the DnaJ-bound protein, DnaK hydrolyzes its bound ATP, resulting in the formation of a stable complex. GrpE releases ADP from DnaK; ATP binding to DnaK triggers the release of the substrate protein, thus completing the reaction cycle. Several rounds of ATP-dependent interactions between DnaJ, DnaK and GrpE are required for fully efficient folding. Also involved, together with DnaK and GrpE, in the DNA replication of plasmids through activation of initiation proteins. The sequence is that of Chaperone protein DnaJ from Pasteurella multocida (strain Pm70).